A 274-amino-acid chain; its full sequence is Cytochrome b-c1 complex subunit Rieske, mitochondrial (274 aa).

The Mitochondrial matrix segment spans residues 79–103 (SHTDIKVPDFSDYRRAEVLDSTKSS). Residues 104–140 (KESSEARKGFSYLVTATTTVGVAYAAKNAVSQFVSSM) traverse the membrane as a helical segment. At 141 to 274 (SASADVLAMS…FTSGDVVVVG (134 aa)) the chain is on the mitochondrial intermembrane side. Residues 187–272 (EAAVEVSQLR…YEFTSGDVVV (86 aa)) form the Rieske domain. [2Fe-2S] cluster contacts are provided by Cys217, His219, Cys236, His239, and Ser241. Cys222 and Cys238 form a disulfide bridge.

It belongs to the Rieske iron-sulfur protein family. As to quaternary structure, component of the ubiquinol-cytochrome c oxidoreductase (cytochrome b-c1 complex, complex III, CIII), a multisubunit enzyme composed of 11 subunits. The complex is composed of 3 respiratory subunits cytochrome b, cytochrome c1 and Rieske protein UQCRFS1, 2 core protein subunits UQCRC1/QCR1 and UQCRC2/QCR2, and 6 low-molecular weight protein subunits UQCRH/QCR6, UQCRB/QCR7, UQCRQ/QCR8, UQCR10/QCR9, UQCR11/QCR10 and subunit 9, the cleavage product of Rieske protein UQCRFS1. The complex exists as an obligatory dimer and forms supercomplexes (SCs) in the inner mitochondrial membrane with NADH-ubiquinone oxidoreductase (complex I, CI) and cytochrome c oxidase (complex IV, CIV), resulting in different assemblies (supercomplex SCI(1)III(2)IV(1) and megacomplex MCI(2)III(2)IV(2)). Incorporation of the Rieske protein UQCRFS1 is the penultimate step in complex III assembly. Interacts with TTC19, which is involved in the clearance of UQCRFS1 fragments. Component of the ubiquinol-cytochrome c oxidoreductase (cytochrome b-c1 complex, complex III, CIII). Subunit 9 corresponds to the mitochondrial targeting sequence (MTS) of Rieske protein UQCRFS1. It is retained after processing and incorporated inside complex III, where it remains bound to the complex and localizes between the 2 core subunits UQCRC1/QCR1 and UQCRC2/QCR2. Requires [2Fe-2S] cluster as cofactor. Proteolytic processing is necessary for the correct insertion of UQCRFS1 in the complex III dimer. Several fragments are generated during UQCRFS1 insertion, most probably due to the endogenous matrix-processing peptidase (MPP) activity of the 2 core protein subunits UQCRC1/QCR1 and UQCRC2/QCR2, which are homologous to the 2 mitochondrial-processing peptidase (MPP) subunits beta-MPP and alpha-MPP respectively. The action of the protease is also necessary for the clearance of the UQCRFS1 fragments.

It is found in the mitochondrion inner membrane. The enzyme catalyses a quinol + 2 Fe(III)-[cytochrome c](out) = a quinone + 2 Fe(II)-[cytochrome c](out) + 2 H(+)(out). Its function is as follows. Component of the ubiquinol-cytochrome c oxidoreductase, a multisubunit transmembrane complex that is part of the mitochondrial electron transport chain which drives oxidative phosphorylation. The respiratory chain contains 3 multisubunit complexes succinate dehydrogenase (complex II, CII), ubiquinol-cytochrome c oxidoreductase (cytochrome b-c1 complex, complex III, CIII) and cytochrome c oxidase (complex IV, CIV), that cooperate to transfer electrons derived from NADH and succinate to molecular oxygen, creating an electrochemical gradient over the inner membrane that drives transmembrane transport and the ATP synthase. The cytochrome b-c1 complex catalyzes electron transfer from ubiquinol to cytochrome c, linking this redox reaction to translocation of protons across the mitochondrial inner membrane, with protons being carried across the membrane as hydrogens on the quinol. In the process called Q cycle, 2 protons are consumed from the matrix, 4 protons are released into the intermembrane space and 2 electrons are passed to cytochrome c. The Rieske protein is a catalytic core subunit containing a [2Fe-2S] iron-sulfur cluster. It cycles between 2 conformational states during catalysis to transfer electrons from the quinol bound in the Q(0) site in cytochrome b to cytochrome c1. Incorporation of UQCRFS1 is the penultimate step in complex III assembly. Functionally, component of the ubiquinol-cytochrome c oxidoreductase (cytochrome b-c1 complex, complex III, CIII). UQCRFS1 undergoes proteolytic processing once it is incorporated in the complex III dimer. One of the fragments, called subunit 9, corresponds to its mitochondrial targeting sequence (MTS). The proteolytic processing is necessary for the correct insertion of UQCRFS1 in the complex III dimer, but the persistence of UQCRFS1-derived fragments may prevent newly imported UQCRFS1 to be processed and assembled into complex III and is detrimental for the complex III structure and function. In Rattus norvegicus (Rat), this protein is Cytochrome b-c1 complex subunit Rieske, mitochondrial (Uqcrfs1).